We begin with the raw amino-acid sequence, 203 residues long: Ribosomal RNA large subunit methyltransferase E (203 aa).

S-adenosyl-L-methionine contacts are provided by G59, W61, D79, N95, and D118. Catalysis depends on K158, which acts as the Proton acceptor.

It belongs to the class I-like SAM-binding methyltransferase superfamily. RNA methyltransferase RlmE family.

Its subcellular location is the cytoplasm. It catalyses the reaction uridine(2552) in 23S rRNA + S-adenosyl-L-methionine = 2'-O-methyluridine(2552) in 23S rRNA + S-adenosyl-L-homocysteine + H(+). Functionally, specifically methylates the uridine in position 2552 of 23S rRNA at the 2'-O position of the ribose in the fully assembled 50S ribosomal subunit. The protein is Ribosomal RNA large subunit methyltransferase E of Wigglesworthia glossinidia brevipalpis.